A 126-amino-acid polypeptide reads, in one-letter code: Glycine cleavage system H protein (126 aa).

The region spanning 24–106 is the Lipoyl-binding domain; sequence TITVGITDHA…YGEGWFFRMK (83 aa). The residue at position 65 (Lys65) is an N6-lipoyllysine.

This sequence belongs to the GcvH family. In terms of assembly, the glycine cleavage system is composed of four proteins: P, T, L and H. Requires (R)-lipoate as cofactor.

Its function is as follows. The glycine cleavage system catalyzes the degradation of glycine. The H protein shuttles the methylamine group of glycine from the P protein to the T protein. This is Glycine cleavage system H protein from Psychrobacter arcticus (strain DSM 17307 / VKM B-2377 / 273-4).